Consider the following 209-residue polypeptide: Small ribosomal subunit protein uS4 (209 aa).

Residues 99–159 (SRLDSVCYRM…EKSKAQLRIK (61 aa)) enclose the S4 RNA-binding domain.

It belongs to the universal ribosomal protein uS4 family. As to quaternary structure, part of the 30S ribosomal subunit. Contacts protein S5. The interaction surface between S4 and S5 is involved in control of translational fidelity.

Functionally, one of the primary rRNA binding proteins, it binds directly to 16S rRNA where it nucleates assembly of the body of the 30S subunit. With S5 and S12 plays an important role in translational accuracy. In Thiobacillus denitrificans (strain ATCC 25259 / T1), this protein is Small ribosomal subunit protein uS4.